A 445-amino-acid chain; its full sequence is MSDVKYLQVEIVDKNTIRLQEDGKKGQQIRLDQIIKVDQSNILNTLEQAQREAYEREAQSRYQTKLAKELSEKDNTFLKQKAAWNQAHNTQIQQLYQQITNLENQVNNIKRETESKKDNEYQQQIVKLETQLQSIKKETESQKDLEYERKANKTKEENQQELERQRQYFLEQLEQAQKDIEELKTREERFSKWAIAKKGKELEKWCWEAYKNYEELFQNCVFAPYSELVKGAKKSIGVEDDESNINEKADFIFQVFNPNNDKEPFFSICCEMKTEFTESKSRTKNEDHVKKLIADAKRAKCQYGFLVSELELNTENDVQVQRMHTSNSEVEVYLVRPMFFIVMLRLFYFLAKKMFAQVDVNSEYLDKEALNASFSDLKKSLLEKTFTDLNKVFQNNIDELEKIEGLVTKLKAANEKALNSRLNNWEEKIRKFEFKLNKDIVKKLE.

Residues 139-160 (TESQKDLEYERKANKTKEENQQ) form a disordered region.

This is an uncharacterized protein from Mycoplasma pneumoniae (strain ATCC 29342 / M129 / Subtype 1) (Mycoplasmoides pneumoniae).